The sequence spans 393 residues: Pyrimidine monooxygenase RutA (393 aa).

Residues 79–80 (IK), Asn145, Glu154, 170–171 (RY), and Ser220 each bind FMN.

It belongs to the NtaA/SnaA/DszA monooxygenase family. RutA subfamily.

It catalyses the reaction uracil + FMNH2 + NADH + O2 = (Z)-3-ureidoacrylate + FMN + NAD(+) + H2O + H(+). The enzyme catalyses thymine + FMNH2 + NADH + O2 = (Z)-2-methylureidoacrylate + FMN + NAD(+) + H2O + H(+). Catalyzes the pyrimidine ring opening between N-3 and C-4 by an unusual flavin hydroperoxide-catalyzed mechanism, adding oxygen atoms in the process to yield ureidoacrylate peracid, that immediately reacts with FMN forming ureidoacrylate and FMN-N(5)-oxide. The FMN-N(5)-oxide reacts spontaneously with NADH to produce FMN. Requires the flavin reductase RutF to regenerate FMN in vivo. The chain is Pyrimidine monooxygenase RutA from Escherichia coli O6:H1 (strain CFT073 / ATCC 700928 / UPEC).